Here is a 190-residue protein sequence, read N- to C-terminus: dCTP deaminase, dUMP-forming (190 aa).

DCTP contacts are provided by residues 101–106 (KSSLGR), aspartate 119, 127–129 (TLE), glutamine 148, tyrosine 162, and glutamine 174. The Proton donor/acceptor role is filled by glutamate 129. The disordered stretch occupies residues 162 to 190 (YGSASAGSKYQGQRGPTPSRSYENFIKNT). Polar residues predominate over residues 166–190 (SAGSKYQGQRGPTPSRSYENFIKNT).

The protein belongs to the dCTP deaminase family. Homotrimer.

The catalysed reaction is dCTP + 2 H2O = dUMP + NH4(+) + diphosphate. The protein operates within pyrimidine metabolism; dUMP biosynthesis; dUMP from dCTP: step 1/1. Its function is as follows. Bifunctional enzyme that catalyzes both the deamination of dCTP to dUTP and the hydrolysis of dUTP to dUMP without releasing the toxic dUTP intermediate. The sequence is that of dCTP deaminase, dUMP-forming from Mycobacterium leprae (strain Br4923).